We begin with the raw amino-acid sequence, 574 residues long: GRB2-associated-binding protein 4 (574 aa).

Residues 1 to 33 (MSLPSPSPSRELCPPDPAFAPLSSWPGSGPAGG) form a disordered region. Positions 39–152 (HVLYSGWLRK…WVQSICQICG (114 aa)) constitute a PH domain. Disordered stretches follow at residues 176–200 (PAEPSCSHQHLPQEQEPTSEPPVSH), 215–234 (LRSHQHASQRAEHARSASFS), 293–331 (SLASHGHTRGSLTGSEADNEASSGKYTQHGGGNASRPAE), and 418–513 (PPVN…PRST). The span at 181-193 (CSHQHLPQEQEPT) shows a compositional bias: polar residues. Composition is skewed to polar residues over residues 302-318 (GSLTGSEADNEASSGKY) and 424-442 (LKPNQKANPTPPNLRNNRV). A compositionally biased stretch (low complexity) spans 457 to 478 (SGTSHTFDSSSSQHPISTQSIT). Residues 502–513 (GGTSSSAPPRST) show a composition bias toward polar residues.

It belongs to the GAB family.

This Homo sapiens (Human) protein is GRB2-associated-binding protein 4 (GAB4).